The sequence spans 229 residues: Cytidylate kinase (229 aa).

15-23 (GPAASGKST) is a binding site for ATP.

Belongs to the cytidylate kinase family. Type 1 subfamily.

It is found in the cytoplasm. The enzyme catalyses CMP + ATP = CDP + ADP. It catalyses the reaction dCMP + ATP = dCDP + ADP. The sequence is that of Cytidylate kinase from Herpetosiphon aurantiacus (strain ATCC 23779 / DSM 785 / 114-95).